Here is a 129-residue protein sequence, read N- to C-terminus: Small ribosomal subunit protein uS11 (129 aa).

It belongs to the universal ribosomal protein uS11 family. Part of the 30S ribosomal subunit. Interacts with proteins S7 and S18. Binds to IF-3.

Functionally, located on the platform of the 30S subunit, it bridges several disparate RNA helices of the 16S rRNA. Forms part of the Shine-Dalgarno cleft in the 70S ribosome. The protein is Small ribosomal subunit protein uS11 of Francisella tularensis subsp. holarctica (strain FTNF002-00 / FTA).